A 787-amino-acid chain; its full sequence is Protein translocase subunit SecA (787 aa).

ATP-binding positions include Gln-85, 103-107, and Asp-492; that span reads GEGKT.

The protein belongs to the SecA family. Monomer and homodimer. Part of the essential Sec protein translocation apparatus which comprises SecA, SecYEG and auxiliary proteins SecDF. Other proteins may also be involved.

Its subcellular location is the cell membrane. The protein resides in the cytoplasm. The enzyme catalyses ATP + H2O + cellular proteinSide 1 = ADP + phosphate + cellular proteinSide 2.. Its function is as follows. Part of the Sec protein translocase complex. Interacts with the SecYEG preprotein conducting channel. Has a central role in coupling the hydrolysis of ATP to the transfer of proteins into and across the cell membrane, serving as an ATP-driven molecular motor driving the stepwise translocation of polypeptide chains across the membrane. In Lacticaseibacillus casei (strain BL23) (Lactobacillus casei), this protein is Protein translocase subunit SecA.